The sequence spans 117 residues: Large ribosomal subunit protein uL18 (117 aa).

This sequence belongs to the universal ribosomal protein uL18 family. Part of the 50S ribosomal subunit; part of the 5S rRNA/L5/L18/L25 subcomplex. Contacts the 5S and 23S rRNAs.

In terms of biological role, this is one of the proteins that bind and probably mediate the attachment of the 5S RNA into the large ribosomal subunit, where it forms part of the central protuberance. The protein is Large ribosomal subunit protein uL18 of Vibrio campbellii (strain ATCC BAA-1116).